A 429-amino-acid chain; its full sequence is Enolase (429 aa).

Gln162 is a binding site for (2R)-2-phosphoglycerate. The active-site Proton donor is the Glu204. 3 residues coordinate Mg(2+): Asp241, Glu288, and Asp315. Lys340, Arg369, Ser370, and Lys391 together coordinate (2R)-2-phosphoglycerate. Catalysis depends on Lys340, which acts as the Proton acceptor.

The protein belongs to the enolase family. The cofactor is Mg(2+).

Its subcellular location is the cytoplasm. The protein resides in the secreted. The protein localises to the cell surface. The enzyme catalyses (2R)-2-phosphoglycerate = phosphoenolpyruvate + H2O. It participates in carbohydrate degradation; glycolysis; pyruvate from D-glyceraldehyde 3-phosphate: step 4/5. Catalyzes the reversible conversion of 2-phosphoglycerate (2-PG) into phosphoenolpyruvate (PEP). It is essential for the degradation of carbohydrates via glycolysis. This is Enolase from Bacteroides fragilis (strain ATCC 25285 / DSM 2151 / CCUG 4856 / JCM 11019 / LMG 10263 / NCTC 9343 / Onslow / VPI 2553 / EN-2).